A 257-amino-acid chain; its full sequence is Acetylglutamate kinase (257 aa).

Residues 41–42 (GG), Arg-63, and Asn-158 contribute to the substrate site.

This sequence belongs to the acetylglutamate kinase family. ArgB subfamily.

It localises to the cytoplasm. The catalysed reaction is N-acetyl-L-glutamate + ATP = N-acetyl-L-glutamyl 5-phosphate + ADP. The protein operates within amino-acid biosynthesis; L-arginine biosynthesis; N(2)-acetyl-L-ornithine from L-glutamate: step 2/4. Functionally, catalyzes the ATP-dependent phosphorylation of N-acetyl-L-glutamate. The protein is Acetylglutamate kinase of Bacteroides thetaiotaomicron (strain ATCC 29148 / DSM 2079 / JCM 5827 / CCUG 10774 / NCTC 10582 / VPI-5482 / E50).